A 409-amino-acid polypeptide reads, in one-letter code: 5-aminolevulinate synthase (409 aa).

Residues R21, S137, and K156 each contribute to the substrate site. Residues S189, H217, and T245 each coordinate pyridoxal 5'-phosphate. K248 is an active-site residue. N6-(pyridoxal phosphate)lysine is present on K248. Pyridoxal 5'-phosphate is bound by residues T277 and T278. T365 provides a ligand contact to substrate.

It belongs to the class-II pyridoxal-phosphate-dependent aminotransferase family. In terms of assembly, homodimer. Requires pyridoxal 5'-phosphate as cofactor.

The catalysed reaction is succinyl-CoA + glycine + H(+) = 5-aminolevulinate + CO2 + CoA. It participates in porphyrin-containing compound metabolism; protoporphyrin-IX biosynthesis; 5-aminolevulinate from glycine: step 1/1. The polypeptide is 5-aminolevulinate synthase (hemA) (Paracoccus denitrificans (strain Pd 1222)).